Here is a 207-residue protein sequence, read N- to C-terminus: Ribosome maturation factor RimP (207 aa).

The tract at residues 171-207 is disordered; sequence RAPGGAPEEGEEDTTEAAPEGAGKSPKPGRRPARKTH. The span at 197–207 shows a compositional bias: basic residues; that stretch reads KPGRRPARKTH.

The protein belongs to the RimP family.

The protein resides in the cytoplasm. Functionally, required for maturation of 30S ribosomal subunits. This Gluconacetobacter diazotrophicus (strain ATCC 49037 / DSM 5601 / CCUG 37298 / CIP 103539 / LMG 7603 / PAl5) protein is Ribosome maturation factor RimP.